Here is a 600-residue protein sequence, read N- to C-terminus: Terpenoid synthase 8 (600 aa).

4 residues coordinate Mg(2+): Asp-352, Asp-356, Asn-497, and Asp-505. A DDXXD motif motif is present at residues 352–356 (DDTCD).

This sequence belongs to the terpene synthase family. Tpsa subfamily. Mg(2+) serves as cofactor. Mn(2+) is required as a cofactor. Stele, and tips of primary and secondary root.

Its subcellular location is the plastid. The enzyme catalyses (2E,6E,10E)-geranylgeranyl diphosphate = rhizathalene A + diphosphate. The protein operates within secondary metabolite biosynthesis; terpenoid biosynthesis. Catalyzes the synthesis of the semivolatile diterpene rhizatalene A. The sequence is that of Terpenoid synthase 8 (TPS08) from Arabidopsis thaliana (Mouse-ear cress).